The sequence spans 129 residues: MSSVTIGKCYIQNRENGGRAFYNLGRKDLGIFTGKMYDDQIWSFQKSDTPGYYTIGRESKFLQYNGEQVIMSDIEQDTTLWSLEEVPEDKGFYRLLNKVHKAYLDYNGGDLVANKHQTESEKWILFKAY.

A carbohydrate-binding positions include 21–23 (FYN), 26–28 (RKD), F32, and 37–40 (YDDQ).

Homodimer. As to expression, highest expression in the outer part of the mantle rim. Highly expressed in gills, with a much lower expression in the digestive gland and posterior adductor muscle. Scarcely detectable in foot.

With respect to regulation, hemagglutination activity requires divalent cations such as Ca(2+). Hemagglutination activity is weakly inhibited by monosaccharides such as D-Gal (25 mM), D-GalNAc (25 mM) and D-Fuc (25 mM) and by disaccharides such as melibiose (25 mM) and lactose (25 mM). Hemagglutination activity is inhibited by bovine submaxillary mucin, but not by porcine stomach mucin or fetuin. Its function is as follows. Galbeta1-3GalNAcbeta1-4Galbeta1-4Glc oligosaccharide-binding lectin. Binds strongly to the oligosaccharides of ganglioside GM1b and to a lesser extent its precursor asialo-GM1. Binds weakly to asialo-GM2 oligosaccharide and to the glycan moiety of globo-series stage-specific embryonal antigen 4 (SSEA-4) hexaose. Binds galactose, N-acetylgalactose and lactose. Does not bind GM1. Does not bind to Gal-beta1,3-GalNAc (Thomsen-Friedenreich antigen), the oligosaccharide of GM1a ganglioside or SSEA-4 tetraose. Does not bind to N-glycans, O-glycans or glycosaminoglycans of glycoproteins. Does not bind Lewis glycans, derivatives of lactose or N-acetyllactosamine or blood group (ABH-type) oligosaccharides. Does not bind glucose. Has hemagglutination activity towards rabbit erythrocytes. Displays cytotoxic effects against various cultured cell lines including human breast (MCF-7), cervical (HeLa) and colon cancer (Caco2) cell lines, as well as dog kidney (MDCK) cell line that express asialo-GM1 oligosaccharide at their cell surface. Shows dose- and time-dependent activation of MKK3/6, ERK1/2 and p38 MAPK, as well as caspase-3/9 in HeLa cervical cancer cells. No cytotoxic effect on BT474 human breast cancer cell line. May be involved in recognition of glycans found on parasitic or symbiotic microorganisms. The sequence is that of GM1b/asialo-GM1 oligosaccharide-binding R-type lectin from Mytilisepta virgata (Purplish bifurcate mussel).